Reading from the N-terminus, the 282-residue chain is MQIVNISAYKFVTLEDIETLRPVMRERCDAAGLKGTILLAPEGINMFLAGTREQIDEFMAWLHADARFADIAPKESLSENQPFKRMLVRAKKEIITMKMPLIRPEAGRAPSVRPVDLKRWLDQGHDDDGRPVVMLDTRNAFEVAVGTFDKAVEYGIDKFSEFPPAVAENKAEFEGKTIVSFCTGGIRCEKAAIHMQEVGIDHVYQLEGGILKYFEEVGGSHYNGDCFVFDYRTALNPNLEPAGPVQCFACRAVVTPEEQQHPKYVVGKSCPHCVDTATQAAA.

A Rhodanese domain is found at 128-222; that stretch reads DGRPVVMLDT…YFEEVGGSHY (95 aa). Residue C182 is the Cysteine persulfide intermediate of the active site.

Belongs to the TrhO family.

The catalysed reaction is uridine(34) in tRNA + AH2 + O2 = 5-hydroxyuridine(34) in tRNA + A + H2O. Its function is as follows. Catalyzes oxygen-dependent 5-hydroxyuridine (ho5U) modification at position 34 in tRNAs. This is tRNA uridine(34) hydroxylase from Cupriavidus metallidurans (strain ATCC 43123 / DSM 2839 / NBRC 102507 / CH34) (Ralstonia metallidurans).